The primary structure comprises 311 residues: MIKLLFMGTPQFSATVLKGLLDNPAYEILGVVTQPDRAVGRKKDIKVTPVKQLALEHGISIYQPEKLSGSQELIEIMGLGADGIITAAFGQFLPTLLLDSVSFAINVHASLLPKYRGGAPIHYAIMNGDKEAGVTIMEMIKEMDAGDMVAKASTPILETDNVGTLFEKLAIIGRDLLLDSLPAYLSGELKPIPQDHSQATFSPNISPEQEKLDWTMSNQEVFSHIRGMNPWPVAHTFLEGQRLKIYEAQLAEGEGLPGQVIVKTKKSLVIATGQGALSLIVVQPAGKPKMSIIDFLNGIGRKLEVGDIIGR.

110–113 contributes to the (6S)-5,6,7,8-tetrahydrofolate binding site; sequence SLLP.

The protein belongs to the Fmt family.

The catalysed reaction is L-methionyl-tRNA(fMet) + (6R)-10-formyltetrahydrofolate = N-formyl-L-methionyl-tRNA(fMet) + (6S)-5,6,7,8-tetrahydrofolate + H(+). In terms of biological role, attaches a formyl group to the free amino group of methionyl-tRNA(fMet). The formyl group appears to play a dual role in the initiator identity of N-formylmethionyl-tRNA by promoting its recognition by IF2 and preventing the misappropriation of this tRNA by the elongation apparatus. This chain is Methionyl-tRNA formyltransferase, found in Streptococcus pyogenes serotype M18 (strain MGAS8232).